A 1325-amino-acid polypeptide reads, in one-letter code: MHTFTRKVKWPFMFTAIGLTFGIVAVACAQPTASTVEGLFKPSSAFADRTDFSLSSILQKSLINRESFNQYLAMRLAPVLRTFYEDNYDTDIKERLNGFTADTDNAFVSQEQNLRNQFRENYLVHLQTDIFDNTGGNQAAWKLRDVNNKIIDDFISRIFAKNFVEYVQDGVGPLTKPTKSLIENTSNFKNIKLQPKFVNKNAKLKINNDAVYAAIQDKLLDQFITNENPNLVSRVVFTNETPVDGFDNYFNTKVIQSPTPSYQFQVFNKYNQQSGGTKGANGFNLLASNLKSYKNDQSKGIDIPNKFSSDSGGKLLLKASDMFDTFDPSFSAAFIQGYLALQKKSKGADSKEVDSLIKDKSIIENFFVDNNTQAAAAARAASSSSEGTIQLKTASDGGGTTQSTVHKTDLVKIFGDKDVFAGEYKQQIGNTNANQTGGGGSGGGGGTSTGSSTGSSTETTTGNSSKAVVDLIEVKKDSSSQPDYILSRGKDGIHLMAVDGGSHYLTESGRDVAKQKKFLLFRALQTKYGLVDTDTTYDFKLFDEVKKYFDTNRILFLFEALLDLSSDTNNKDNFLSYPQFKKFADSIKSIEKDLKELVQAHYKQAVFNETAVAENKVTLKLAERNQPFIDNERNNQIEQNGLAAKLPYEQDAKTGHYNDLGNYYKDIIDNVDKKGTSTVKTTSSNTGQTKNFSEEVVSKLKDNKKKVEEAAKKHVEALKVFTIPSPLYSQVILVQTKLSFTPESTSLGLNLALNNYLTSTELQNSIKLSYFQEDEAFKKIIDITNLTFSQQSGGTGGTNGNNNLTADNWKIFKETYLLDLFESQAQKSIFGHVGSSDKNSSTKTGIEGVLDTLYSSLNLEERLDSDDVIDYLSYLYTAHWLLKDNLKNYKQSLQSKLSRTSNAFLVWSVDSEKNKNDSQSTLSSTASSTSNTGLIQLRSVVSLAQNQAAGQGGDNNSDITQTEVKNPNFVFGSSVYDWTNSKTPEVNRAADDTSSFFYTKSSSSSTGAAQSSATVLRSLNQASGMTTKTAKNRYGFRGIVTSSTSGSLPEAVSRRLFKQFVNQTEKGVKVGGQMLITTAKSGKATLVLKQQADDAESTTNNAYKGALFSFGSMDNLKNIINGIQTQTEFDALYNHLTSDLNIDVTGVDKNKTLTEQKTSLTSFVDSNFKQSTQSAQRGDTSARSARSATVQIKKTQEDNQNTNYKDVFSRFDGYIGDNKVEEKNYTSYQFLSDGGKYHATFVKQVNLDDVEKIGTDSLKQEDSSKDKRLNLSLEEFLAAIALEALDPNNQTQAINALISGNKKGLVKVGDFRIFSSISAQWVRRF.

The first 27 residues, 1 to 27 (MHTFTRKVKWPFMFTAIGLTFGIVAVA), serve as a signal peptide directing secretion. Cys-28 carries the N-palmitoyl cysteine lipid modification. A lipid anchor (S-diacylglycerol cysteine) is attached at Cys-28. 2 disordered regions span residues 379–402 (RAASSSSEGTIQLKTASDGGGTTQ) and 430–464 (NTNANQTGGGGSGGGGGTSTGSSTGSSTETTTGNS). Positions 436–448 (TGGGGSGGGGGTS) are enriched in gly residues. The segment covering 449-464 (TGSSTGSSTETTTGNS) has biased composition (low complexity).

Belongs to the MG307/MG309/MG338 family.

The protein resides in the cell membrane. This is an uncharacterized protein from Mycoplasma pneumoniae (strain ATCC 29342 / M129 / Subtype 1) (Mycoplasmoides pneumoniae).